The primary structure comprises 125 residues: uncharacterized protein (125 aa).

Positions 45–110 constitute a Cupin type-2 domain; the sequence is IVPVGSKTLL…IGNVPLKILC (66 aa).

This is an uncharacterized protein from Methanocaldococcus jannaschii (strain ATCC 43067 / DSM 2661 / JAL-1 / JCM 10045 / NBRC 100440) (Methanococcus jannaschii).